Here is a 494-residue protein sequence, read N- to C-terminus: One cut domain family member 3 (494 aa).

Disordered stretches follow at residues 130-162 (AAAVAGAHGGHPHAHPHPAAAPPPPPPPQRLAA), 199-239 (LSPL…GDKL), and 295-319 (AHGPHGGGGGPGGSGGGPSAGAAAE). 2 stretches are compositionally biased toward pro residues: residues 148–158 (AAAPPPPPPPQ) and 214–225 (PQPPPPPPPPPL). The segment covering 297 to 313 (GPHGGGGGPGGSGGGPS) has biased composition (gly residues). The CUT DNA-binding region spans 312-398 (PSAGAAAEEI…QRMSALRLAA (87 aa)). Residues 414–473 (PKKQRLVFTDLQRRTLIAIFKENKRPSKEMQVTISQQLGLELNTVSNFFMNARRRCMNRW) constitute a DNA-binding region (homeobox). Residues 475–494 (EEPSTAPGGPAGATATFSKA) are disordered. The segment covering 476–494 (EPSTAPGGPAGATATFSKA) has biased composition (low complexity).

The protein belongs to the CUT homeobox family.

It localises to the nucleus. Functionally, transcriptional activator. Binds the consensus DNA sequence 5'-DHWATTGAYTWWD-3' on a variety of gene promoters such as those of HNF3B and TTR. In Homo sapiens (Human), this protein is One cut domain family member 3 (ONECUT3).